The primary structure comprises 453 residues: Septin-10 (453 aa).

The interval 18 to 43 (KTAHTSSQVSDHEQKQKDSPRSLTMS) is disordered. The span at 27 to 37 (SDHEQKQKDSP) shows a compositional bias: basic and acidic residues. Residues 62 to 328 (QGFCFNILCV…ELYRRRKLEE (267 aa)) form the Septin-type G domain. A G1 motif region spans residues 72-79 (GETGIGKS). Residues 72-79 (GETGIGKS), glycine 127, 208-216 (KADAISKTE), glycine 262, and arginine 277 each bind GTP. The tract at residues 124–127 (NTVG) is G3 motif. A G4 motif region spans residues 207–210 (AKAD). A disordered region spans residues 433–453 (TFMTPGSNLRKDKDRKNSNFM). The span at 441-453 (LRKDKDRKNSNFM) shows a compositional bias: basic and acidic residues.

It belongs to the TRAFAC class TrmE-Era-EngA-EngB-Septin-like GTPase superfamily. Septin GTPase family. In terms of assembly, septins polymerize into heterooligomeric protein complexes that form filaments, and can associate with cellular membranes, actin filaments and microtubules. GTPase activity is required for filament formation. Interacts with ADGB. In terms of processing, proteolytically cleaved in vitro in a calmodulin-dependent manner.

The protein resides in the cytoplasm. It is found in the cytoskeleton. The protein localises to the cell projection. It localises to the cilium. Its subcellular location is the flagellum. Functionally, filament-forming cytoskeletal GTPase. May play a role in cytokinesis (Potential). This chain is Septin-10, found in Bos taurus (Bovine).